Reading from the N-terminus, the 424-residue chain is Imidazolonepropionase (424 aa).

Fe(3+) contacts are provided by His-84 and His-86. Zn(2+) is bound by residues His-84 and His-86. Arg-93, Tyr-156, and His-189 together coordinate 4-imidazolone-5-propanoate. An N-formimidoyl-L-glutamate-binding site is contributed by Tyr-156. His-254 lines the Fe(3+) pocket. Residue His-254 participates in Zn(2+) binding. Residue Glu-257 participates in 4-imidazolone-5-propanoate binding. A Fe(3+)-binding site is contributed by Asp-328. Asp-328 lines the Zn(2+) pocket. N-formimidoyl-L-glutamate-binding residues include Asn-330 and Gly-332. Ser-333 is a binding site for 4-imidazolone-5-propanoate.

The protein belongs to the metallo-dependent hydrolases superfamily. HutI family. The cofactor is Zn(2+). Requires Fe(3+) as cofactor.

The protein resides in the cytoplasm. It catalyses the reaction 4-imidazolone-5-propanoate + H2O = N-formimidoyl-L-glutamate. It functions in the pathway amino-acid degradation; L-histidine degradation into L-glutamate; N-formimidoyl-L-glutamate from L-histidine: step 3/3. Functionally, catalyzes the hydrolytic cleavage of the carbon-nitrogen bond in imidazolone-5-propanoate to yield N-formimidoyl-L-glutamate. It is the third step in the universal histidine degradation pathway. This Geobacillus sp. (strain WCH70) protein is Imidazolonepropionase.